We begin with the raw amino-acid sequence, 373 residues long: MHPVLRQMRPQPRATTASAAVALSGSGEQEEPQCPTLELEEGEGIARLGAHSPERHPRVQLARDSRVAFVPRQNMFRDNSGEEAEEMRDCRFRAGRELRRGFNRERLLREEDFEPDEHSGISSARAHVSAANLVTAYEQTVTEERNFQKSFNNHVRTLIAREEVAIGLMHLWDFVEAYVHNPASKPLTAQLFLIVQHSRDNETFRDAMLNIAEPQGRWLLDLINILQSIVVQERSLSLADKVAAINYSMLSLGKFYARKIYKSPYVPIDKEVKIDSFYMRMALKVLTLSDDLGVYRNDRIHKAVSASRRRELSDKELMHSLQRALTGAGTEDESFFDMGADLRWQPSARALEAAGVASADVTGDDDDEDQYED.

The interval 1-32 (MHPVLRQMRPQPRATTASAAVALSGSGEQEEP) is disordered. Positions 1–150 (MHPVLRQMRP…VTEERNFQKS (150 aa)) are interaction with packaging protein 1. A phosphoserine; by host mark is found at Ser-52 and Ser-334.

The protein belongs to the adenoviridae packaging protein 3 family. Part of the genome packaging complex composed of packaging proteins 1, 2 and 3; this complex specifically binds to the packaging sequence on the left end of viral genomic DNA and performs packaging of the viral genome. Interacts with hexon-linking protein IIIa; this interaction is required to promote correct genome packaging. In terms of processing, cleaved at different sites by the viral protease during virion maturation.

It is found in the host nucleus. In terms of biological role, involved in viral genome packaging through its interaction with packaging proteins 1 and 2. After proteolytic cleavage by adenovirus protease, L1 52/55k protein is removed from the capsid during viral maturation. The polypeptide is Packaging protein 3 (Homo sapiens (Human)).